The following is a 256-amino-acid chain: Short-chain dehydrogenase/reductase cdmF (256 aa).

Residues V11, D57, and R119 each coordinate NADP(+). The active-site Proton donor is S137. NADP(+) contacts are provided by Y151, K155, G183, and N187. Catalysis depends on Y151, which acts as the Proton acceptor. K155 functions as the Lowers pKa of active site Tyr in the catalytic mechanism.

This sequence belongs to the short-chain dehydrogenases/reductases (SDR) family.

It catalyses the reaction 3-hydroxypentacecilide A + A = chrodrimanin C + AH2. It carries out the reaction chrodrimanin F + A = chrodrimanin H + AH2. It functions in the pathway secondary metabolite biosynthesis; terpenoid biosynthesis. Functionally, short-chain dehydrogenase/reductase; part of the gene cluster that mediates the biosynthesis of chrodrimanin B, a meroterpenoid that acts as a potent blocker of insect GABA-gated chloride channels. The first step of the pathway is the biosynthesis of 6-hydroxymellein by the polyketide synthase cdmE. The prenyltransferase cdmH acts as a 6-hydroxymellein 5-farnesyltransferase and produces the hydrophobic metabolite verruculide C. The FAD-dependent monooxygenase cdmI further converts verruculide C into verruculide B. The terpene cyclase cdmG then produced the pentacyclic molecule 3-hydroxypentacecilide A, the backbone structure of chrodrimanin B, via folding the farnesyl moiety of the substrate into the chair-boat conformation. The short-chain dehydrogenase/reductase cdmF functions as the 3-OH dehydrogenase that oxidizes the C-3 hydroxyl group of 3-hydroxypentacecilide A and produces chrodrimanin C, the dehydrogenated product of 3-hydroxypentacecilide A. The cytochrome P450 monooxygenase cdmJ then accepts both 3-hydroxypentacecilide A and chrodrimanin C and functions as a C-7-beta-hydroxylase to produce respectively chrodrimanin H and chrodrimanin F. The dioxygenase cdmA accepts chrodrimanin H to afford chrodrimanin E, which is further transformed to chrodrimanin A by the dioxygenase cdmD. CdmA can also accept chrodrimanin C as substrate to convert it into verruculide A, which is further converted into chrodrimanin T by cdmD. The last step of the biosynthesis is proposed to be performed by the acetyltransferase cdmC which acetylates chrodrimanin A to yield chrodrimanin B. The pathway may also lead to the production of additional shunt products, including chrodrimanins T and U. This Talaromyces verruculosus (Penicillium verruculosum) protein is Short-chain dehydrogenase/reductase cdmF.